Consider the following 198-residue polypeptide: DnaJ homolog subfamily C member 12 (198 aa).

Position 1 is an N-acetylmethionine (Met-1). Residues 14–79 (DYYTLLGCDE…ESRARYDHWR (66 aa)) form the J domain. The disordered stretch occupies residues 121 to 183 (TNTAQNKERS…CGHLHFRWSG (63 aa)). Residues 126–156 (NKERSEQRETKQGDPDSTPEKMMQKESESPE) show a composition bias toward basic and acidic residues. Ser-160, Ser-166, and Ser-182 each carry phosphoserine.

Interacts with HSPA8. Interacts with TPH1. Interacts with TPH2.

It is found in the cytoplasm. In terms of biological role, probable co-chaperone that participates in the proper folding of biopterin-dependent aromatic amino acid hydroxylases, which include phenylalanine-4-hydroxylase (PAH), tyrosine 3-monooxygenase (TH) and peripheral and neuronal tryptophan hydroxylases (TPH1 and TPH2). The sequence is that of DnaJ homolog subfamily C member 12 (Dnajc12) from Rattus norvegicus (Rat).